Consider the following 316-residue polypeptide: Melanocyte-stimulating hormone receptor (316 aa).

At 1 to 37 (MPMQGAQRKLLGSLNSTPTATSNLGLAANHTGAPCLE) the chain is on the extracellular side. A glycan (N-linked (GlcNAc...) asparagine) is linked at asparagine 29. The chain crosses the membrane as a helical span at residues 38–63 (VSIPDGLFLSLGLVSLVENVLVVAAI). Over 64 to 72 (AKNRNLHSS) the chain is Cytoplasmic. The chain crosses the membrane as a helical span at residues 73-93 (MYCFICCLALSDLLVSGSNML). Over 94–118 (ETAVILLLETGALATRTSVVQQLHN) the chain is Extracellular. A helical transmembrane segment spans residues 119-140 (TINVLTCSSMLCSLCFLGAIAV). Topologically, residues 141–163 (DRYISIFYALRYHSIMTLPRAQR) are cytoplasmic. Residues 164 to 183 (AIAAIWVASVLSSTLFITYY) traverse the membrane as a helical segment. Topologically, residues 184 to 191 (DHAAVLLC) are extracellular. The chain crosses the membrane as a helical span at residues 192-211 (LVVFFLAMLVLMAVLYVHML). Topologically, residues 212–240 (ARACQHAHGIIRLHKRQTPAHQAFGLRGA) are cytoplasmic. The chain crosses the membrane as a helical span at residues 241–266 (ATLTILLGIFFLCWGPFFLHLTLVVF). At 267 to 279 (CPQHLTCSCIFKN) the chain is on the extracellular side. Residues 280-300 (FKVFLTLIICNTIIDPLIYAF) traverse the membrane as a helical segment. Residues 301-316 (RSQELRRTLKEVLCSW) are Cytoplasmic-facing. The S-palmitoyl cysteine moiety is linked to residue cysteine 314.

The protein belongs to the G-protein coupled receptor 1 family. Interacts with MGRN1, but does not undergo MGRN1-mediated ubiquitination; this interaction competes with GNAS-binding and thus inhibits agonist-induced cAMP production. Interacts with OPN3; the interaction results in a decrease in MC1R-mediated cAMP signaling and ultimately a decrease in melanin production in melanocytes.

It localises to the cell membrane. Functionally, receptor for MSH (alpha, beta and gamma) and ACTH. The activity of this receptor is mediated by G proteins which activate adenylate cyclase. Mediates melanogenesis, the production of eumelanin (black/brown) and phaeomelanin (red/yellow), via regulation of cAMP signaling in melanocytes. This Saguinus geoffroyi (Geoffroy's tamarin) protein is Melanocyte-stimulating hormone receptor (MC1R).